Consider the following 368-residue polypeptide: Ethanol acetyltransferase 1 (368 aa).

The transit peptide at 1 to 21 directs the protein to the mitochondrion; sequence MFLSLRPSLSVSRLAVVRRAY. The region spanning 67–171 is the AB hydrolase-1 domain; the sequence is PIIFFHGLLG…IIDNAPEPQP (105 aa). Residues Ser-140, Asp-164, and His-315 each act as charge relay system in the active site. The segment at 344–368 is disordered; it reads RNKDPNNYMQTQNSISNSDTMGQSL. Residues 348–368 are compositionally biased toward polar residues; it reads PNNYMQTQNSISNSDTMGQSL.

Belongs to the AB hydrolase superfamily.

It localises to the mitochondrion. The catalysed reaction is ethanol + acetyl-CoA = ethyl acetate + CoA. The enzyme catalyses acetyl-CoA + H2O = acetate + CoA + H(+). It carries out the reaction ethyl acetate + H2O = ethanol + acetate + H(+). Alcohol acetyltransferase that catalyzes the synthesis of ethyl acetate from ethanol and acetyl-CoA. Can also function as a thioesterase by hydrolyzing acetyl-CoA in the absence of ethanol, as well as esterase hydrolyzing ethyl acetate. The protein is Ethanol acetyltransferase 1 (EAT1) of Kluyveromyces lactis (strain ATCC 8585 / CBS 2359 / DSM 70799 / NBRC 1267 / NRRL Y-1140 / WM37) (Yeast).